We begin with the raw amino-acid sequence, 381 residues long: 3-dehydroquinate synthase (381 aa).

NAD(+)-binding positions include 81–86 (EGESSK), 115–119 (GVIGD), 139–140 (TS), lysine 152, and lysine 161. 3 residues coordinate Zn(2+): glutamate 194, histidine 256, and histidine 274.

This sequence belongs to the sugar phosphate cyclases superfamily. Dehydroquinate synthase family. The cofactor is Co(2+). Zn(2+) is required as a cofactor. It depends on NAD(+) as a cofactor.

The protein resides in the cytoplasm. The catalysed reaction is 7-phospho-2-dehydro-3-deoxy-D-arabino-heptonate = 3-dehydroquinate + phosphate. It functions in the pathway metabolic intermediate biosynthesis; chorismate biosynthesis; chorismate from D-erythrose 4-phosphate and phosphoenolpyruvate: step 2/7. In terms of biological role, catalyzes the conversion of 3-deoxy-D-arabino-heptulosonate 7-phosphate (DAHP) to dehydroquinate (DHQ). The protein is 3-dehydroquinate synthase of Rhodopseudomonas palustris (strain TIE-1).